A 256-amino-acid polypeptide reads, in one-letter code: UPF0246 protein SPO0106 (256 aa).

It belongs to the UPF0246 family.

This is UPF0246 protein SPO0106 from Ruegeria pomeroyi (strain ATCC 700808 / DSM 15171 / DSS-3) (Silicibacter pomeroyi).